The sequence spans 296 residues: Glycine--tRNA ligase alpha subunit (296 aa).

The protein belongs to the class-II aminoacyl-tRNA synthetase family. Tetramer of two alpha and two beta subunits.

The protein resides in the cytoplasm. It catalyses the reaction tRNA(Gly) + glycine + ATP = glycyl-tRNA(Gly) + AMP + diphosphate. This is Glycine--tRNA ligase alpha subunit from Synechococcus sp. (strain WH7803).